We begin with the raw amino-acid sequence, 222 residues long: UPF0758 protein YicR (222 aa).

Residues 100 to 222 (PLLSPEMTRE…YVSFAERGWI (123 aa)) enclose the MPN domain. The Zn(2+) site is built by histidine 171, histidine 173, and aspartate 184. A JAMM motif motif is present at residues 171–184 (HNHPSGCAEPSKAD).

This sequence belongs to the UPF0758 family. YicR subfamily.

The polypeptide is UPF0758 protein YicR (Escherichia coli O45:K1 (strain S88 / ExPEC)).